A 269-amino-acid chain; its full sequence is tRNA (guanine-N(1)-)-methyltransferase (269 aa).

S-adenosyl-L-methionine-binding positions include glycine 115 and 139–144 (LGDYVL).

This sequence belongs to the RNA methyltransferase TrmD family. Homodimer.

It is found in the cytoplasm. The catalysed reaction is guanosine(37) in tRNA + S-adenosyl-L-methionine = N(1)-methylguanosine(37) in tRNA + S-adenosyl-L-homocysteine + H(+). Functionally, specifically methylates guanosine-37 in various tRNAs. The sequence is that of tRNA (guanine-N(1)-)-methyltransferase from Pseudarthrobacter chlorophenolicus (strain ATCC 700700 / DSM 12829 / CIP 107037 / JCM 12360 / KCTC 9906 / NCIMB 13794 / A6) (Arthrobacter chlorophenolicus).